The chain runs to 132 residues: D-beta-hydroxybutyrate dehydrogenase, mitochondrial (132 aa).

3–27 (LVTGCDSGFGFSLAKHLHSKGFLVF) serves as a coordination point for NAD(+). The residue at position 17 (lysine 17) is an N6-acetyllysine. Serine 59 contributes to the substrate binding site. The active-site Proton acceptor is the tyrosine 66. N6-acetyllysine is present on lysine 70. Residue serine 77 is glycosylated (O-linked (GlcNAc) serine). Serine 104 is modified (phosphoserine).

The protein belongs to the short-chain dehydrogenases/reductases (SDR) family. Homotetramer.

The protein resides in the mitochondrion inner membrane. It localises to the mitochondrion matrix. The catalysed reaction is (R)-3-hydroxybutanoate + NAD(+) = acetoacetate + NADH + H(+). With respect to regulation, requires phosphatidylcholine as an allosteric activator for enzymatic activity. The polypeptide is D-beta-hydroxybutyrate dehydrogenase, mitochondrial (Mesocricetus auratus (Golden hamster)).